Consider the following 121-residue polypeptide: Probable V-type proton ATPase subunit F (121 aa).

Belongs to the V-ATPase F subunit family. V-ATPase is a heteromultimeric enzyme made up of two complexes: the ATP-hydrolytic V1 complex and the proton translocation V0 complex. The V1 complex consists of three catalytic AB heterodimers that form a heterohexamer, three peripheral stalks each consisting of EG heterodimers, one central rotor including subunits D and F, and the regulatory subunits C and H. The proton translocation complex V0 consists of the proton transport subunit a, a ring of proteolipid subunits c9c'', rotary subunit d, subunits e and f, and the accessory subunits vah-19/Ac45 and vah-20/PRR.

Functionally, subunit of the V1 complex of vacuolar(H+)-ATPase (V-ATPase), a multisubunit enzyme composed of a peripheral complex (V1) that hydrolyzes ATP and a membrane integral complex (V0) that translocates protons. V-ATPase is responsible for acidifying and maintaining the pH of intracellular compartments and in some cell types, is targeted to the plasma membrane, where it is responsible for acidifying the extracellular environment. Required along with other vacuolar ATPase components for the removal of protein aggregates which form in immature oocytes in the distal gonad. This removal occurs as the oocytes mature and move to the proximal gonad, is triggered by the introduction of sperm through mating and occurs before fertilization. The introduction of sperm triggers V-ATPase accumulation in proximal oocytes and induces lysosomal acidification which leads to engulfing of protein aggregates by lysosomes and subsequent clearance of the aggregates. Lysosomal acidification also leads to changes in mitochondrial morphology and function. Mitochondria in distal immature oocytes are fragmented, produce high levels of reactive oxygen species (ROS) and have high membrane potential, indicative of metabolic inactivity. In contrast, mitochondria in proximal mature oocytes are tubular with lower ROS levels and membrane potential, indicative of an active metabolic state required for aggregate mobilization before clearance. The sequence is that of Probable V-type proton ATPase subunit F from Caenorhabditis elegans.